The chain runs to 525 residues: Protein nucleotidyltransferase YdiU (525 aa).

8 residues coordinate ATP: glycine 107, glycine 109, arginine 110, lysine 129, aspartate 141, glycine 142, arginine 192, and arginine 199. Aspartate 268 serves as the catalytic Proton acceptor. Mg(2+) is bound by residues asparagine 269 and aspartate 278. Aspartate 278 contacts ATP.

Belongs to the SELO family. Mg(2+) is required as a cofactor. Requires Mn(2+) as cofactor.

It catalyses the reaction L-seryl-[protein] + ATP = 3-O-(5'-adenylyl)-L-seryl-[protein] + diphosphate. The enzyme catalyses L-threonyl-[protein] + ATP = 3-O-(5'-adenylyl)-L-threonyl-[protein] + diphosphate. It carries out the reaction L-tyrosyl-[protein] + ATP = O-(5'-adenylyl)-L-tyrosyl-[protein] + diphosphate. The catalysed reaction is L-histidyl-[protein] + UTP = N(tele)-(5'-uridylyl)-L-histidyl-[protein] + diphosphate. It catalyses the reaction L-seryl-[protein] + UTP = O-(5'-uridylyl)-L-seryl-[protein] + diphosphate. The enzyme catalyses L-tyrosyl-[protein] + UTP = O-(5'-uridylyl)-L-tyrosyl-[protein] + diphosphate. In terms of biological role, nucleotidyltransferase involved in the post-translational modification of proteins. It can catalyze the addition of adenosine monophosphate (AMP) or uridine monophosphate (UMP) to a protein, resulting in modifications known as AMPylation and UMPylation. In Ralstonia nicotianae (strain ATCC BAA-1114 / GMI1000) (Ralstonia solanacearum), this protein is Protein nucleotidyltransferase YdiU.